A 223-amino-acid polypeptide reads, in one-letter code: Ras-related protein Rab-37 (223 aa).

Positions M1–S23 are disordered. T2 carries the post-translational modification N-acetylthreonine. 8 residues coordinate GTP: T38, G39, V40, G41, K42, T43, C44, and T62. T43 serves as a coordination point for Mg(2+). 2 consecutive short sequence motifs (switch) follow at residues G52 to F67 and D85 to D102. T62 and D85 together coordinate Mg(2+). Residues G88, N143, K144, D146, M147, S173, A174, and K175 each coordinate GTP. Residues C219 and C220 are each lipidated (S-geranylgeranyl cysteine). The residue at position 220 (C220) is a Cysteine methyl ester. A propeptide spans S221–M223 (removed in mature form).

This sequence belongs to the small GTPase superfamily. Rab family. As to quaternary structure, interacts with RIMS1. Interacts (in GDP-bound form) with RPGR, RPGR functions as guanine exchange factor (GEF). Mg(2+) serves as cofactor.

It localises to the cytoplasmic vesicle. The protein resides in the cell projection. It is found in the cilium. The enzyme catalyses GTP + H2O = GDP + phosphate + H(+). With respect to regulation, regulated by guanine nucleotide exchange factors (GEFs) including RPGR which promote the exchange of bound GDP for free GTP. Regulated by GTPase activating proteins (GAPs) which increase the GTP hydrolysis activity. Inhibited by GDP dissociation inhibitors (GDIs). In terms of biological role, the small GTPases Rab are key regulators of intracellular membrane trafficking, from the formation of transport vesicles to their fusion with membranes. Rabs cycle between an inactive GDP-bound form and an active GTP-bound form that is able to recruit to membranes different sets of downstream effectors directly responsible for vesicle formation, movement, tethering and fusion. Acts as an organizer for autophagosome biogenesis in a GTP-dependent manner. Involved in retinal homeostasis by autophagy regulation. The sequence is that of Ras-related protein Rab-37 from Homo sapiens (Human).